A 534-amino-acid chain; its full sequence is NAD(P)H-quinone oxidoreductase chain 4 (534 aa).

A run of 14 helical transmembrane segments spans residues Phe-12 to Phe-32, Phe-44 to Phe-64, Ile-94 to Trp-114, Pro-120 to Val-140, Leu-144 to Trp-164, Phe-176 to Phe-196, Ile-220 to His-240, Thr-251 to Leu-271, Phe-285 to Phe-305, Ile-314 to Ser-334, Ala-340 to Ala-360, Phe-384 to Val-404, Val-425 to Met-445, and Val-472 to Val-492.

Belongs to the complex I subunit 4 family.

The protein localises to the cellular thylakoid membrane. The enzyme catalyses a plastoquinone + NADH + (n+1) H(+)(in) = a plastoquinol + NAD(+) + n H(+)(out). It catalyses the reaction a plastoquinone + NADPH + (n+1) H(+)(in) = a plastoquinol + NADP(+) + n H(+)(out). In terms of biological role, NDH-1 shuttles electrons from NAD(P)H, via FMN and iron-sulfur (Fe-S) centers, to quinones in the respiratory chain. The immediate electron acceptor for the enzyme in this species is believed to be plastoquinone. Couples the redox reaction to proton translocation (for every two electrons transferred, four hydrogen ions are translocated across the cytoplasmic membrane), and thus conserves the redox energy in a proton gradient. This Prochlorococcus marinus (strain MIT 9312) protein is NAD(P)H-quinone oxidoreductase chain 4.